The chain runs to 476 residues: MTDTGSSDTNTDTTGTSKANTMWGGRFAAGPDAIMEAINASISFDQRMARQDIEGSRAHAAMLAATGIVESSDVDVIREGLLTVLSEIEGGTFQYSTALEDIHMNVEARLTEIIGTPAGRLHTARSRNDQVATDFKLWVRDQMDAAISGIEALQRALLGQAEAGADWVMPGFTHLQTAQPVTWGHHMMAYVEMLGRDASRFRDARTRMNESPLGAAALAGTSFPIDRDMTAEALGFDRPSANSLDAVADRDFALEFLSAASICAMHLSRFAEELVIWSSAQFRFVALSDRFSTGSSIMPQKKNPDAAELIRAKIGRIFGANVALMTVMKGLPLTYSKDMQEDKEQTFDAADNLMLALAAMEGMVRDMQANVPSLEAAASSGFSTATDLADWLVRELNMPFREAHHVTGSLVKLAEDKGCDLPDLALSDMHSVHGDITDGVFDVLGVHNSVASRTSYGGTSPVQVREQVARWRDILG.

The segment covering 1–17 (MTDTGSSDTNTDTTGTS) has biased composition (low complexity). The segment at 1–22 (MTDTGSSDTNTDTTGTSKANTM) is disordered.

Belongs to the lyase 1 family. Argininosuccinate lyase subfamily.

It is found in the cytoplasm. The catalysed reaction is 2-(N(omega)-L-arginino)succinate = fumarate + L-arginine. Its pathway is amino-acid biosynthesis; L-arginine biosynthesis; L-arginine from L-ornithine and carbamoyl phosphate: step 3/3. The chain is Argininosuccinate lyase from Jannaschia sp. (strain CCS1).